We begin with the raw amino-acid sequence, 489 residues long: MSELRETRLEKANALKEQGQEPYALRFDLTDRMARLQADHADLAKGAERDLKVSVAGRVMTRRVMGKLAFFTLADETGTIQLFLEKATLGDSFAQLSSLVDAGDLIGVHGILRRTDRGELSVKVSKWEMLTKSLQPLPDKWHGLADVEKRYRQRYLDLIVTPQSRETFRRRAMAVSAIRRWLDERDFLEIETPVLQSEAGGAEARPFITHHNTLDLPLYLRIATELHLKRLVVGGFERVYELGRIFRNEGVSTRHNPEFTSVEVYQAYADYNDMMTLTEQLIASVCEQVCGTTRISYQGVEVDLTPSWRRATMHELVQEATGLDFTSFETREAAVEAMRAANLPAPDKADTVGRLLNEAFEHAVEPNLIQPTFVLDYPQEISPLARKHRSKPGLVERFELFIVGRETANAFSELTDPLDQRGRMELQQERRAAGDVEASGVDEDFIQALEVGMPPTGGLGIGIDRLVMLLTDSPSIRDVIAFPLMRPEG.

Residues E399 and E406 each contribute to the Mg(2+) site.

The protein belongs to the class-II aminoacyl-tRNA synthetase family. In terms of assembly, homodimer. Mg(2+) serves as cofactor.

The protein localises to the cytoplasm. It catalyses the reaction tRNA(Lys) + L-lysine + ATP = L-lysyl-tRNA(Lys) + AMP + diphosphate. This is Lysine--tRNA ligase from Synechococcus sp. (strain CC9311).